A 478-amino-acid chain; its full sequence is Cytochrome c lysine N-methyltransferase 1 (478 aa).

Residues 32–284 enclose the SET domain; it reads PCVSIERSQI…DRFEVFISYC (253 aa). An SET-like region spans residues 199-299; it reads TRAVVLRVYA…VHFKHTYGFF (101 aa).

This sequence belongs to the class V-like SAM-binding methyltransferase superfamily.

It localises to the cytoplasm. The protein localises to the cytosol. The catalysed reaction is L-lysyl-[cytochrome c] + S-adenosyl-L-methionine = N(6)-methyl-L-lysyl-[cytochrome c] + S-adenosyl-L-homocysteine + H(+). Methyltransferase which mediates trimethylation of cytochrome c (CYC1). The chain is Cytochrome c lysine N-methyltransferase 1 (CTM1) from Eremothecium gossypii (strain ATCC 10895 / CBS 109.51 / FGSC 9923 / NRRL Y-1056) (Yeast).